The primary structure comprises 230 residues: Magnesium-protoporphyrin O-methyltransferase (230 aa).

The protein belongs to the class I-like SAM-binding methyltransferase superfamily. Magnesium protoporphyrin O-methyltransferase family.

It carries out the reaction Mg-protoporphyrin IX + S-adenosyl-L-methionine = Mg-protoporphyrin IX 13-monomethyl ester + S-adenosyl-L-homocysteine. Its pathway is porphyrin-containing compound metabolism; chlorophyll biosynthesis (light-independent). In terms of biological role, converts Mg-protoporphyrin IX to Mg-protoporphyrin IX methylester using S-adenosyl-L-methionine as a cofactor. This Synechocystis sp. (strain ATCC 27184 / PCC 6803 / Kazusa) protein is Magnesium-protoporphyrin O-methyltransferase (chlM).